We begin with the raw amino-acid sequence, 1405 residues long: DNA-directed RNA polymerase subunit beta' (1405 aa).

Residues C71, C73, C86, and C89 each coordinate Zn(2+). Mg(2+)-binding residues include D462, D464, and D466. Positions 820, 893, 900, and 903 each coordinate Zn(2+).

This sequence belongs to the RNA polymerase beta' chain family. As to quaternary structure, the RNAP catalytic core consists of 2 alpha, 1 beta, 1 beta' and 1 omega subunit. When a sigma factor is associated with the core the holoenzyme is formed, which can initiate transcription. The cofactor is Mg(2+). It depends on Zn(2+) as a cofactor.

The catalysed reaction is RNA(n) + a ribonucleoside 5'-triphosphate = RNA(n+1) + diphosphate. Its function is as follows. DNA-dependent RNA polymerase catalyzes the transcription of DNA into RNA using the four ribonucleoside triphosphates as substrates. The polypeptide is DNA-directed RNA polymerase subunit beta' (Methylorubrum populi (strain ATCC BAA-705 / NCIMB 13946 / BJ001) (Methylobacterium populi)).